The following is a 248-amino-acid chain: ATP synthase subunit a, chloroplastic (248 aa).

A run of 5 helical transmembrane segments spans residues 35 to 55 (GQVF…SFLG), 94 to 114 (VPYI…GALI), 133 to 153 (INTT…AGLS), 202 to 222 (VFTL…GLFA), and 224 to 244 (SIQA…AMEG).

This sequence belongs to the ATPase A chain family. In terms of assembly, F-type ATPases have 2 components, CF(1) - the catalytic core - and CF(0) - the membrane proton channel. CF(1) has five subunits: alpha(3), beta(3), gamma(1), delta(1), epsilon(1). CF(0) has four main subunits: a, b, b' and c.

The protein resides in the plastid. It localises to the chloroplast thylakoid membrane. In terms of biological role, key component of the proton channel; it plays a direct role in the translocation of protons across the membrane. This chain is ATP synthase subunit a, chloroplastic, found in Pyropia yezoensis (Susabi-nori).